Reading from the N-terminus, the 891-residue chain is uncharacterized protein (891 aa).

The N-terminal stretch at M1–A20 is a signal peptide. The next 6 helical transmembrane spans lie at V525–I545, T568–A588, L614–I634, V652–M672, I685–I705, and F776–L796.

It belongs to the TrbL/VirB6 family.

The protein localises to the cell membrane. This is an uncharacterized protein from Rickettsia conorii (strain ATCC VR-613 / Malish 7).